The primary structure comprises 122 residues: Large ribosomal subunit protein uL14 (122 aa).

Belongs to the universal ribosomal protein uL14 family. In terms of assembly, part of the 50S ribosomal subunit. Forms a cluster with proteins L3 and L19. In the 70S ribosome, L14 and L19 interact and together make contacts with the 16S rRNA in bridges B5 and B8.

Binds to 23S rRNA. Forms part of two intersubunit bridges in the 70S ribosome. The protein is Large ribosomal subunit protein uL14 of Staphylococcus epidermidis (strain ATCC 35984 / DSM 28319 / BCRC 17069 / CCUG 31568 / BM 3577 / RP62A).